The primary structure comprises 69 residues: Cytochrome c oxidase subunit 8A, mitochondrial (69 aa).

A mitochondrion-targeting transit peptide spans 1-25 (MSVLTPLLLRGLTGSARRLPVPCAR). The SIFI-degron motif lies at 2–19 (SVLTPLLLRGLTGSARRL). Residues 26 to 36 (VHSKPPREQLG) are Mitochondrial matrix-facing. Residues 37–60 (TMDIAIGLTSCFVCFLLPSGWVLS) traverse the membrane as a helical segment. Over 61–69 (HLENYKKRE) the chain is Mitochondrial intermembrane.

The protein belongs to the cytochrome c oxidase VIII family. Component of the cytochrome c oxidase (complex IV, CIV), a multisubunit enzyme composed of 14 subunits. The complex is composed of a catalytic core of 3 subunits MT-CO1, MT-CO2 and MT-CO3, encoded in the mitochondrial DNA, and 11 supernumerary subunits COX4I, COX5A, COX5B, COX6A, COX6B, COX6C, COX7A, COX7B, COX7C, COX8 and NDUFA4, which are encoded in the nuclear genome. The complex exists as a monomer or a dimer and forms supercomplexes (SCs) in the inner mitochondrial membrane with NADH-ubiquinone oxidoreductase (complex I, CI) and ubiquinol-cytochrome c oxidoreductase (cytochrome b-c1 complex, complex III, CIII), resulting in different assemblies (supercomplex SCI(1)III(2)IV(1) and megacomplex MCI(2)III(2)IV(2)). In terms of processing, in response to mitochondrial stress, the precursor protein is ubiquitinated by the SIFI complex in the cytoplasm before mitochondrial import, leading to its degradation. Within the SIFI complex, UBR4 initiates ubiquitin chain that are further elongated or branched by KCMF1.

Its subcellular location is the mitochondrion inner membrane. Its pathway is energy metabolism; oxidative phosphorylation. Component of the cytochrome c oxidase, the last enzyme in the mitochondrial electron transport chain which drives oxidative phosphorylation. The respiratory chain contains 3 multisubunit complexes succinate dehydrogenase (complex II, CII), ubiquinol-cytochrome c oxidoreductase (cytochrome b-c1 complex, complex III, CIII) and cytochrome c oxidase (complex IV, CIV), that cooperate to transfer electrons derived from NADH and succinate to molecular oxygen, creating an electrochemical gradient over the inner membrane that drives transmembrane transport and the ATP synthase. Cytochrome c oxidase is the component of the respiratory chain that catalyzes the reduction of oxygen to water. Electrons originating from reduced cytochrome c in the intermembrane space (IMS) are transferred via the dinuclear copper A center (CU(A)) of subunit 2 and heme A of subunit 1 to the active site in subunit 1, a binuclear center (BNC) formed by heme A3 and copper B (CU(B)). The BNC reduces molecular oxygen to 2 water molecules using 4 electrons from cytochrome c in the IMS and 4 protons from the mitochondrial matrix. The sequence is that of Cytochrome c oxidase subunit 8A, mitochondrial (COX8A) from Otolemur crassicaudatus (Brown greater galago).